Consider the following 925-residue polypeptide: Alanine--tRNA ligase (925 aa).

His-611, His-615, Cys-714, and His-718 together coordinate Zn(2+).

It belongs to the class-II aminoacyl-tRNA synthetase family. The cofactor is Zn(2+).

It localises to the cytoplasm. The enzyme catalyses tRNA(Ala) + L-alanine + ATP = L-alanyl-tRNA(Ala) + AMP + diphosphate. Catalyzes the attachment of alanine to tRNA(Ala) in a two-step reaction: alanine is first activated by ATP to form Ala-AMP and then transferred to the acceptor end of tRNA(Ala). Also edits incorrectly charged Ser-tRNA(Ala) and Gly-tRNA(Ala) via its editing domain. This chain is Alanine--tRNA ligase, found in Methanosarcina acetivorans (strain ATCC 35395 / DSM 2834 / JCM 12185 / C2A).